Consider the following 798-residue polypeptide: Integrin beta-1 (798 aa).

The N-terminal stretch at 1-20 (MNLQLIFWIGLISSVCCVFG) is a signal peptide. Residues 21–728 (QADEDRCLKA…ETPECPTGPD (708 aa)) are Extracellular-facing. Residues 26-76 (RCLKANAKSCGECIQAGPNCGWCTNSTFLQEGMPTSARCDDLEALKKKGCH) enclose the PSI domain. Cystine bridges form between cysteine 27–cysteine 45, cysteine 35–cysteine 464, cysteine 38–cysteine 64, cysteine 48–cysteine 75, cysteine 207–cysteine 213, cysteine 261–cysteine 301, cysteine 401–cysteine 415, cysteine 435–cysteine 462, cysteine 466–cysteine 486, cysteine 477–cysteine 489, cysteine 491–cysteine 500, cysteine 502–cysteine 533, cysteine 516–cysteine 531, cysteine 525–cysteine 536, cysteine 538–cysteine 553, cysteine 555–cysteine 576, cysteine 560–cysteine 574, cysteine 568–cysteine 579, cysteine 581–cysteine 590, cysteine 592–cysteine 615, cysteine 599–cysteine 613, cysteine 607–cysteine 618, cysteine 620–cysteine 630, cysteine 633–cysteine 636, cysteine 640–cysteine 691, cysteine 646–cysteine 665, cysteine 649–cysteine 661, and cysteine 699–cysteine 723. Over residues 75-91 (CHPNDTENPRGSKDIKK) the composition is skewed to basic and acidic residues. The interval 75–105 (CHPNDTENPRGSKDIKKNKNVTNRSKGTAEK) is disordered. 2 N-linked (GlcNAc...) asparagine glycosylation sites follow: asparagine 94 and asparagine 97. The region spanning 140 to 378 (DYPIDLYYLM…QLIIDAYNSL (239 aa)) is the VWFA domain. Mg(2+) contacts are provided by serine 152 and serine 154. 4 residues coordinate Ca(2+): serine 154, aspartate 157, aspartate 158, and glutamate 189. The CX3CL1-binding stretch occupies residues 207 to 213 (CTNEQNC). N-linked (GlcNAc...) asparagine glycosylation is present at asparagine 212. Ca(2+)-binding residues include asparagine 244, aspartate 246, proline 248, and glutamate 249. Glutamate 249 is a Mg(2+) binding site. A glycan (N-linked (GlcNAc...) asparagine) is linked at asparagine 269. The segment at 295–314 (LPNDGQCHLKNDVYTMSHYY) is CX3CL1-binding. Alanine 362 is a binding site for Ca(2+). The tract at residues 383-465 (ILENSKLPEG…IILQFICECE (83 aa)) is interaction with TMEM182. N-linked (GlcNAc...) asparagine glycans are attached at residues asparagine 406 and asparagine 417. I-EGF domains lie at 466–501 (CQGEGIPGSPKCHDGNGTFECGACRCNEGRVGRHCE), 502–554 (CSTD…KFCE), 555–591 (CDNFNCDRSNGLICGGNGVCKCRVCECNPNYTGSACD), and 592–631 (CSLDTTSCMAVNGQICNGRGVCECGACKCTDPKFQGPTCE). Asparagine 481 carries N-linked (GlcNAc...) asparagine glycosylation. An N-linked (GlcNAc...) asparagine glycan is attached at asparagine 520. Asparagine 584 carries N-linked (GlcNAc...) asparagine glycosylation. N-linked (GlcNAc...) asparagine glycosylation occurs at asparagine 669. The helical transmembrane segment at 729–749 (IIPIVAGVVAGIVLIGLALLL) threads the bilayer. The Cytoplasmic segment spans residues 750–798 (IWKLLMIIHDRREFAKFEKERMNAKWDTGENPIYKSAVTTVVNPKYEGK). Positions 762–767 (EFAKFE) are signal for sorting from recycling endosomes; interaction with ACAP1. Threonine 777 is subject to Phosphothreonine. Tyrosine 783 carries the phosphotyrosine modification. Residue serine 785 is modified to Phosphoserine. Residues 785-792 (SAVTTVVN) are interaction with ITGB1BP1. At threonine 789 the chain carries Phosphothreonine. Lysine 794 carries the post-translational modification N6-acetyllysine; alternate. Lysine 794 participates in a covalent cross-link: Glycyl lysine isopeptide (Lys-Gly) (interchain with G-Cter in SUMO1); alternate.

The protein belongs to the integrin beta chain family. In terms of assembly, interacts with seprase FAP (seprase); the interaction occurs at the cell surface of invadopodia membrane in a collagen-dependent manner. Heterodimer of an alpha and a beta subunit. Beta-1 associates with either alpha-1, alpha-2, alpha-3, alpha-4, alpha-5, alpha-6, alpha-7, alpha-8, alpha-9, alpha-10, alpha-11 or alpha-V. ITGA6:ITGB1 is found in a complex with CD9; interaction takes place in oocytes and is involved in sperm-egg fusion. Binds LGALS3BP and NMRK2, when associated with alpha-7, but not with alpha-5. Interacts with FLNA, FLNB, FLNC and RANBP9. Interacts with KRT1 in the presence of RACK1 and SRC. Interacts with JAML; integrin alpha-4/beta-1 may regulate leukocyte to endothelial cells adhesion by controlling JAML homodimerization. Interacts with RAB21. Interacts (via the cytoplasmic region) with RAB25 (via the hypervariable C-terminal region). Interacts with MYO10. Interacts with ITGB1BP1 (via C-terminal region); the interaction is a prerequisite for focal adhesion disassembly. Interacts with TLN1; the interaction is prevented by competitive binding of ITGB1BP1. Interacts with ACAP1; required for ITGB1 recycling. Interacts with ASAP3. Interacts with FERMT2; the interaction is inhibited in presence of ITGB1BP1. Interacts with DAB2. Interacts with FGR and HCK. Interacts with alpha-7A and alpha-7B in adult skeletal muscle. Interacts with alpha-7B in cardiomyocytes of adult heart. Interacts with EMP2; the interaction may be direct or indirect and ITGB1 has a heterodimer form. ITGA5:ITGB1 interacts with CCN3. ITGA4:ITGB1 is found in a ternary complex with CX3CR1 and CX3CL1. ITGA5:ITGB1 interacts with FBN1. ITGA5:ITGB1 acts as a receptor for fibronectin FN1 and mediates R-G-D-dependent cell adhesion to FN1. ITGA5:ITGB1 interacts with IL1B. Interacts with MDK. ITGA4:ITGB1 interacts with MDK; this interaction mediates MDK-induced osteoblast cells migration through PXN phosphorylation. ITGA6:ITGB1 interacts with MDK; this interaction mediates MDK-induced neurite-outgrowth. ITGA5:ITGB1 interacts with ACE2. Interacts with TMEM182 and LAMB1. Interacts with tensin TNS3; TNS3 also interacts with PEAK1, thus acting as an adapter molecule to bridge the association of PEAK1 with ITGB1. Interacts with tensin TNS4; the interaction displaces tensin TNS3 from the ITGB1 cytoplasmic tail and promotes ITGB1 stability. Integrin ITGA9:ITGB1 interacts with SPP1/OPN (via N-terminus). Integrin ITGA9:ITGB1 interacts with TNC/TNFN3 (via the 3rd Fibronectin type-III domain). Integrins ITGA4:ITGB1 and ITGA9:ITGB1 interact with SVEP1 (via Sushi domain 21); thereby inhibit Ca(2+) intracellular signaling and as a result repress vasocontraction. ITGA4:ITGB1 and ITGA5:ITGB1 interacts with SELP. Interacts with CD248. ITGA5:ITGB1 interacts with IGFBP1. ITGA4:ITGB1 interacts with BCAM. Interacts with ADGRG6.

Its subcellular location is the cell membrane. It is found in the cell projection. The protein localises to the invadopodium membrane. It localises to the ruffle membrane. The protein resides in the recycling endosome. Its subcellular location is the melanosome. It is found in the cell junction. The protein localises to the focal adhesion. It localises to the lamellipodium. The protein resides in the ruffle. Functionally, integrins alpha-1/beta-1, alpha-2/beta-1, alpha-10/beta-1 and alpha-11/beta-1 are receptors for collagen. Integrins alpha-1/beta-1 and alpha-2/beta-2 recognize the proline-hydroxylated sequence G-F-P-G-E-R in collagen. Integrins alpha-2/beta-1, alpha-3/beta-1, alpha-4/beta-1, alpha-5/beta-1, alpha-8/beta-1, alpha-10/beta-1, alpha-11/beta-1 and alpha-V/beta-1 are receptors for fibronectin. Alpha-4/beta-1 recognizes one or more domains within the alternatively spliced CS-1 and CS-5 regions of fibronectin. Integrin alpha-5/beta-1 is a receptor for fibrinogen. Integrin alpha-1/beta-1, alpha-2/beta-1, alpha-6/beta-1 and alpha-7/beta-1 are receptors for lamimin. Integrin alpha-6/beta-1 (ITGA6:ITGB1) is present in oocytes and is involved in sperm-egg fusion. Integrin alpha-4/beta-1 is a receptor for VCAM1 and recognizes the sequence Q-I-D-S in VCAM1. Integrin alpha-9/beta-1 is a receptor for VCAM1, cytotactin and osteopontin. It recognizes the sequence A-E-I-D-G-I-E-L in cytotactin. Integrin alpha-3/beta-1 is a receptor for epiligrin, thrombospondin and CSPG4. Integrin alpha-3/beta-1 provides a docking site for FAP (seprase) at invadopodia plasma membranes in a collagen-dependent manner and hence may participate in the adhesion, formation of invadopodia and matrix degradation processes, promoting cell invasion. Alpha-3/beta-1 may mediate with LGALS3 the stimulation by CSPG4 of endothelial cells migration. Integrin alpha-V/beta-1 is a receptor for vitronectin. Beta-1 integrins recognize the sequence R-G-D in a wide array of ligands. When associated with alpha-7/beta-1 integrin, regulates cell adhesion and laminin matrix deposition. Involved in promoting endothelial cell motility and angiogenesis. Involved in osteoblast compaction through the fibronectin fibrillogenesis cell-mediated matrix assembly process and the formation of mineralized bone nodules. May be involved in up-regulation of the activity of kinases such as PKC via binding to KRT1. Together with KRT1 and RACK1, serves as a platform for SRC activation or inactivation. Plays a mechanistic adhesive role during telophase, required for the successful completion of cytokinesis. ITGA4:ITGB1 binds to fractalkine (CX3CL1) and may act as its coreceptor in CX3CR1-dependent fractalkine signaling. ITGA4:ITGB1 and ITGA5:ITGB1 bind to PLA2G2A via a site (site 2) which is distinct from the classical ligand-binding site (site 1) and this induces integrin conformational changes and enhanced ligand binding to site 1. ITGA5:ITGB1 acts as a receptor for fibrillin-1 (FBN1) and mediates R-G-D-dependent cell adhesion to FBN1. ITGA5:ITGB1 is a receptor for IL1B and binding is essential for IL1B signaling. ITGA5:ITGB3 is a receptor for soluble CD40LG and is required for CD40/CD40LG signaling. Plays an important role in myoblast differentiation and fusion during skeletal myogenesis. ITGA9:ITGB1 may play a crucial role in SVEP1/polydom-mediated myoblast cell adhesion. Integrins ITGA9:ITGB1 and ITGA4:ITGB1 repress PRKCA-mediated L-type voltage-gated channel Ca(2+) influx and ROCK-mediated calcium sensitivity in vascular smooth muscle cells via their interaction with SVEP1, thereby inhibit vasocontraction. The sequence is that of Integrin beta-1 from Camelus bactrianus (Bactrian camel).